We begin with the raw amino-acid sequence, 471 residues long: Tryptophanase (471 aa).

N6-acetyllysine is present on residues Lys-5, Lys-115, and Lys-156. Lys-270 is subject to N6-(pyridoxal phosphate)lysine. Position 450 is an N6-acetyllysine (Lys-450).

It belongs to the beta-eliminating lyase family. As to quaternary structure, homotetramer. Pyridoxal 5'-phosphate serves as cofactor.

The catalysed reaction is L-tryptophan + H2O = indole + pyruvate + NH4(+). It participates in amino-acid degradation; L-tryptophan degradation via pyruvate pathway; indole and pyruvate from L-tryptophan: step 1/1. The chain is Tryptophanase from Escherichia coli O139:H28 (strain E24377A / ETEC).